The primary structure comprises 66 residues: Small archaeal modifier protein 2 (66 aa).

Lys58 is covalently cross-linked (Glycyl lysine isopeptide (Lys-Gly) (interchain with G-Cter in SAMP2)). Position 66 is a 1-thioglycine; alternate (Gly66). Gly66 carries the post-translational modification Glycyl adenylate; alternate. Gly66 is covalently cross-linked (Glycyl lysine isopeptide (Gly-Lys) (interchain with K-? in acceptor proteins); alternate).

Monomer. Monomeric and polymeric forms interact with NcsA. Post-translationally, the C-terminal glycine is likely acyl-adenylated (-COAMP) by UbaA, and also probably thiocarboxylated (-COSH) to function in sulfur transfer.

In terms of biological role, functions as a protein modifier covalently attached to lysine residues of substrate proteins, as well as a sulfur carrier in tRNA thiolation. The protein modification process is termed sampylation and involves the formation of an isopeptide bond between the SAMP2 C-terminal glycine carboxylate and the epsilon-amino group of lysine residues on target proteins. Is able to form polymeric chains with itself at Lys-58, similar to ubiquitin and other ubiquitin-like proteins. May serve as a proteolytic signal in the cell to target proteins for degradation by proteasomes. The chain is Small archaeal modifier protein 2 (samp2) from Haloferax volcanii (strain ATCC 29605 / DSM 3757 / JCM 8879 / NBRC 14742 / NCIMB 2012 / VKM B-1768 / DS2) (Halobacterium volcanii).